The sequence spans 314 residues: Electron transfer flavoprotein subunit alpha (314 aa).

253 to 281 (LYVAVGISGAIQHLAGMKDSKVIVAINKD) provides a ligand contact to FAD.

This sequence belongs to the ETF alpha-subunit/FixB family. In terms of assembly, heterodimer of an alpha and a beta subunit. FAD is required as a cofactor.

In terms of biological role, the electron transfer flavoprotein serves as a specific electron acceptor for other dehydrogenases. It transfers the electrons to the main respiratory chain via ETF-ubiquinone oxidoreductase (ETF dehydrogenase). In Bradyrhizobium diazoefficiens (strain JCM 10833 / BCRC 13528 / IAM 13628 / NBRC 14792 / USDA 110), this protein is Electron transfer flavoprotein subunit alpha (etfA).